The sequence spans 377 residues: tRNA-specific 2-thiouridylase MnmA (377 aa).

ATP-binding positions include 12 to 19 (GMSGGVDS) and Met-38. Residues 98–100 (NPD) form an interaction with target base in tRNA region. Residue Cys-103 is the Nucleophile of the active site. A disulfide bridge connects residues Cys-103 and Cys-200. Residue Gly-127 coordinates ATP. The interaction with tRNA stretch occupies residues 150 to 152 (KDQ). The Cysteine persulfide intermediate role is filled by Cys-200. The segment at 314–315 (RY) is interaction with tRNA.

The protein belongs to the MnmA/TRMU family.

The protein resides in the cytoplasm. It carries out the reaction S-sulfanyl-L-cysteinyl-[protein] + uridine(34) in tRNA + AH2 + ATP = 2-thiouridine(34) in tRNA + L-cysteinyl-[protein] + A + AMP + diphosphate + H(+). Functionally, catalyzes the 2-thiolation of uridine at the wobble position (U34) of tRNA, leading to the formation of s(2)U34. The protein is tRNA-specific 2-thiouridylase MnmA of Limosilactobacillus reuteri (strain DSM 20016) (Lactobacillus reuteri).